The chain runs to 352 residues: Diacylglycerol acyltransferase/mycolyltransferase Ag85C (352 aa).

A signal peptide spans 1-37 (MSFIEKVRKLRGAAATMPRRLAIAAVGASLLSGVAVA). 86–87 (LR) contributes to the substrate binding site. The segment at 102-112 (FEEFYQSGLSV) is fibronectin-binding. Residues serine 170 and asparagine 198 each coordinate substrate. The active-site Nucleophile is the serine 170. Glutamate 274 is a catalytic residue. Substrate is bound by residues 276 to 279 (LTLR) and 306 to 308 (HSW). The active site involves histidine 306. Residues 332 to 352 (TAAPAQPAQPAQPAQPAQPAT) are disordered. The segment covering 333–352 (AAPAQPAQPAQPAQPAQPAT) has biased composition (low complexity).

It belongs to the mycobacterial A85 antigen family. As to quaternary structure, homodimer.

It localises to the secreted. It catalyses the reaction an acyl-CoA + a 1,2-diacyl-sn-glycerol = a triacyl-sn-glycerol + CoA. The enzyme catalyses 2 alpha,alpha'-trehalose 6-mycolate = alpha,alpha'-trehalose 6,6'-bismycolate + alpha,alpha-trehalose. The antigen 85 proteins (FbpA, FbpB, FbpC) are responsible for the high affinity of mycobacteria to fibronectin, a large adhesive glycoprotein, which facilitates the attachment of M.tuberculosis to murine alveolar macrophages (AMs). They also help to maintain the integrity of the cell wall by catalyzing the transfer of mycolic acids to cell wall arabinogalactan and through the synthesis of alpha,alpha-trehalose dimycolate (TDM, cord factor). They catalyze the transfer of a mycoloyl residue from one molecule of alpha,alpha-trehalose monomycolate (TMM) to another TMM, leading to the formation of TDM. The protein is Diacylglycerol acyltransferase/mycolyltransferase Ag85C (fbpC) of Mycobacterium avium.